The following is a 464-amino-acid chain: Phosphoglucosamine mutase (464 aa).

The Phosphoserine intermediate role is filled by S112. The Mg(2+) site is built by S112, D252, D254, and D256. At S112 the chain carries Phosphoserine.

This sequence belongs to the phosphohexose mutase family. Mg(2+) serves as cofactor. In terms of processing, activated by phosphorylation.

It carries out the reaction alpha-D-glucosamine 1-phosphate = D-glucosamine 6-phosphate. Functionally, catalyzes the conversion of glucosamine-6-phosphate to glucosamine-1-phosphate. This chain is Phosphoglucosamine mutase, found in Synechococcus sp. (strain CC9902).